We begin with the raw amino-acid sequence, 876 residues long: Alanine--tRNA ligase (876 aa).

Zn(2+)-binding residues include His-568, His-572, Cys-670, and His-674.

This sequence belongs to the class-II aminoacyl-tRNA synthetase family. Zn(2+) is required as a cofactor.

It is found in the cytoplasm. The catalysed reaction is tRNA(Ala) + L-alanine + ATP = L-alanyl-tRNA(Ala) + AMP + diphosphate. In terms of biological role, catalyzes the attachment of alanine to tRNA(Ala) in a two-step reaction: alanine is first activated by ATP to form Ala-AMP and then transferred to the acceptor end of tRNA(Ala). Also edits incorrectly charged Ser-tRNA(Ala) and Gly-tRNA(Ala) via its editing domain. The sequence is that of Alanine--tRNA ligase from Anaplasma phagocytophilum (strain HZ).